Reading from the N-terminus, the 25-residue chain is Inorganic pyrophosphatase (25 aa).

In terms of assembly, monomer. Requires Mg(2+) as cofactor.

The catalysed reaction is diphosphate + H2O = 2 phosphate + H(+). In Cyanophora paradoxa, this protein is Inorganic pyrophosphatase.